The sequence spans 269 residues: HTH-type transcriptional regulator Rv0792c (269 aa).

The 69-residue stretch at 20–88 (VPASTQLAEA…QGLGTFVADP (69 aa)) folds into the HTH gntR-type domain. Positions 48–67 (ERELIDRSGLSRVTVRAAVG) form a DNA-binding region, H-T-H motif.

In terms of assembly, homodimer.

Its activity is regulated as follows. DNA-binding activity is increased in the presence of L-arabinose and inhibited by the small molecule I-OMe-Tyrphostin. Transcriptional regulator required for survival in oxidative stress and for establishing infection in host tissues. Regulates the expression of a subset of genes involved in oxidative stress adaptation and virulence, enabling the bacteria to adapt and persist in host tissues. This chain is HTH-type transcriptional regulator Rv0792c, found in Mycobacterium tuberculosis (strain ATCC 25618 / H37Rv).